The following is a 244-amino-acid chain: tRNA (guanine-N(7)-)-methyltransferase (244 aa).

The segment covering 1–10 has biased composition (polar residues); that stretch reads MSDTPQSPAQ. A disordered region spans residues 1–20; it reads MSDTPQSPAQDSLAEHDEAR. Residues E74, E99, D126, and D149 each contribute to the S-adenosyl-L-methionine site. D149 is a catalytic residue. Substrate is bound by residues K153, D185, and 222–225; that span reads TKFE.

Belongs to the class I-like SAM-binding methyltransferase superfamily. TrmB family.

It catalyses the reaction guanosine(46) in tRNA + S-adenosyl-L-methionine = N(7)-methylguanosine(46) in tRNA + S-adenosyl-L-homocysteine. It participates in tRNA modification; N(7)-methylguanine-tRNA biosynthesis. Its function is as follows. Catalyzes the formation of N(7)-methylguanine at position 46 (m7G46) in tRNA. The protein is tRNA (guanine-N(7)-)-methyltransferase of Pseudomonas paraeruginosa (strain DSM 24068 / PA7) (Pseudomonas aeruginosa (strain PA7)).